Consider the following 1336-residue polypeptide: Zinc finger protein 335 (1336 aa).

2 disordered regions span residues 1–108 (MEEN…LVHS) and 199–222 (PTST…LAQP). 2 stretches are compositionally biased toward low complexity: residues 31-45 (TSEA…AATA) and 54-65 (SGVGQSSDSGSR). The C2H2-type 1 zinc finger occupies 247–270 (FKCKMCQYRSSTKATLLRHMRERH). Disordered regions lie at residues 282-398 (AGKR…PSSS) and 415-442 (VSQS…GRPS). The span at 300–331 (EEGPEEEEEDDDIVDAGAIDDLEEDSDYNPAE) shows a compositional bias: acidic residues. Low complexity predominate over residues 339–349 (LRLQRPTPSTL). Basic residues predominate over residues 350-361 (RPRRRPGRPRKL). Positions 362-373 (PRLETSDLHDGI) are enriched in basic and acidic residues. Positions 378 to 387 (VSSQSTQSPP) are enriched in polar residues. 8 consecutive C2H2-type zinc fingers follow at residues 465-487 (YLCR…VNSH), 495-517 (FKCL…MFNH), 523-545 (YKCD…AAVH), 562-584 (FPCP…MKTH), 590-612 (HMCD…LLTH), 621-643 (FKCE…QLSH), 649-672 (FKCS…AVKH), and 678-701 (FACE…RCRH). Disordered stretches follow at residues 732-766 (LKQQ…TPPL) and 961-1013 (LQCG…AAAS). Residues 752–766 (PQEPAPFQPPETPPL) are compositionally biased toward pro residues. Serine 975 and serine 1006 each carry phosphoserine. 4 C2H2-type zinc fingers span residues 1018–1040 (FSCK…KRAH), 1046–1068 (FKCP…MAQH), 1074–1096 (HQCN…MLTH), and 1102–1125 (FSCH…QRLH). Lysine 1021 participates in a covalent cross-link: Glycyl lysine isopeptide (Lys-Gly) (interchain with G-Cter in SUMO2). Serine 1148 carries the post-translational modification Phosphoserine.

This sequence belongs to the krueppel C2H2-type zinc-finger protein family. Interacts with NCOA6; may enhance ligand-dependent transcriptional activation by nuclear hormone receptors. Interacts with CNOT6. Interacts with CNOT9; the interaction is direct. Component of a nuclear receptor-mediated transcription complex composed of at least ZNF335, CCAR2 and EMSY; the complex stimulates the transcription of nuclear receptor target genes such as SOX9 and HOXA1. Within the complex interacts with EMSY and interacts (via C-terminus) with CCAR2. Interacts with members of histone H3'Lys4'(H3K4) methyltransferase complexes ASH2L, CXXC1, KMT2A/MLL1, RBBP5, SETD1A and WDR5. Component of a histone methylation complex composed of at least ZNF335, RBBP5, ASH2L and WDR5; the complex may have histone H3-specific methyltransferase activity, however does not have specificity for 'Lys-4' of histone H3. Interacts with RBBP5 and WDR5. Interacts with ASHL2. Components of this complex may associate with components of the ZNF335-CCAR2-EMSY nuclear receptor-mediated transcription complex to form a complex at least composed of ZNF335, HCFC1, CCAR2, EMSY, MKI67, RBBP5, ASH2L and WDR5. Within this complex also interacts with HCFC1 and MKI67.

The protein localises to the nucleus. Its function is as follows. Component or associated component of some histone methyltransferase complexes may regulate transcription through recruitment of those complexes on gene promoters. Enhances ligand-dependent transcriptional activation by nuclear hormone receptors. Plays an important role in neural progenitor cell proliferation and self-renewal through the regulation of specific genes involved brain development, including REST. Also controls the expression of genes involved in somatic development and regulates, for instance, lymphoblast proliferation. The chain is Zinc finger protein 335 (Znf335) from Rattus norvegicus (Rat).